Reading from the N-terminus, the 446-residue chain is tRNA wybutosine-synthesizing protein 2 homolog (446 aa).

S-adenosyl-L-methionine contacts are provided by residues Ser208, Lys215, Glu255, and 283–284; that span reads DN.

The protein belongs to the class I-like SAM-binding methyltransferase superfamily. TRM5/TYW2 family.

The enzyme catalyses 4-demethylwyosine(37) in tRNA(Phe) + S-adenosyl-L-methionine = 4-demethyl-7-[(3S)-3-amino-3-carboxypropyl]wyosine(37) in tRNA(Phe) + S-methyl-5'-thioadenosine + H(+). It functions in the pathway tRNA modification; wybutosine-tRNA(Phe) biosynthesis. Functionally, S-adenosyl-L-methionine-dependent transferase that acts as a component of the wybutosine biosynthesis pathway. Wybutosine is a hyper modified guanosine with a tricyclic base found at the 3'-position adjacent to the anticodon of eukaryotic phenylalanine tRNA. Catalyzes the transfer of the alpha-amino-alpha-carboxypropyl (acp) group from S-adenosyl-L-methionine to the C-7 position of 4-demethylwyosine (imG-14) to produce wybutosine-86. The polypeptide is tRNA wybutosine-synthesizing protein 2 homolog (Trmt12) (Mus musculus (Mouse)).